A 156-amino-acid polypeptide reads, in one-letter code: SsrA-binding protein (156 aa).

Belongs to the SmpB family.

The protein localises to the cytoplasm. Its function is as follows. Required for rescue of stalled ribosomes mediated by trans-translation. Binds to transfer-messenger RNA (tmRNA), required for stable association of tmRNA with ribosomes. tmRNA and SmpB together mimic tRNA shape, replacing the anticodon stem-loop with SmpB. tmRNA is encoded by the ssrA gene; the 2 termini fold to resemble tRNA(Ala) and it encodes a 'tag peptide', a short internal open reading frame. During trans-translation Ala-aminoacylated tmRNA acts like a tRNA, entering the A-site of stalled ribosomes, displacing the stalled mRNA. The ribosome then switches to translate the ORF on the tmRNA; the nascent peptide is terminated with the 'tag peptide' encoded by the tmRNA and targeted for degradation. The ribosome is freed to recommence translation, which seems to be the essential function of trans-translation. This Renibacterium salmoninarum (strain ATCC 33209 / DSM 20767 / JCM 11484 / NBRC 15589 / NCIMB 2235) protein is SsrA-binding protein.